A 107-amino-acid chain; its full sequence is DNA-directed RNA polymerase subunit omega (107 aa).

The protein belongs to the RNA polymerase subunit omega family. As to quaternary structure, the RNAP catalytic core consists of 2 alpha, 1 beta, 1 beta' and 1 omega subunit. When a sigma factor is associated with the core the holoenzyme is formed, which can initiate transcription.

The enzyme catalyses RNA(n) + a ribonucleoside 5'-triphosphate = RNA(n+1) + diphosphate. Promotes RNA polymerase assembly. Latches the N- and C-terminal regions of the beta' subunit thereby facilitating its interaction with the beta and alpha subunits. The protein is DNA-directed RNA polymerase subunit omega of Mycolicibacterium smegmatis (strain ATCC 700084 / mc(2)155) (Mycobacterium smegmatis).